The chain runs to 627 residues: Sphingomyelin phosphodiesterase (627 aa).

The first 44 residues, Met1–Ala44, serve as a signal peptide directing secretion. In terms of domain architecture, Saposin B-type spans Gln83 to Asp167. Asn84 is a glycosylation site (N-linked (GlcNAc...) asparagine). Disulfide bonds link Cys87-Cys163, Cys90-Cys155, and Cys118-Cys129. Asn173 carries an N-linked (GlcNAc...) asparagine glycan. Residues Asp204 and His206 each contribute to the Zn(2+) site. 2 disulfides stabilise this stretch: Cys219-Cys224 and Cys225-Cys248. Zn(2+)-binding residues include Asp276 and Asn316. N-linked (GlcNAc...) asparagine glycans are attached at residues Asn333 and Asn393. Cysteines 383 and 429 form a disulfide. Residues His423, His455, and His457 each contribute to the Zn(2+) site. Ser506 carries the phosphoserine modification. Asn518 carries N-linked (GlcNAc...) asparagine glycosylation. 2 cysteine pairs are disulfide-bonded: Cys582–Cys586 and Cys592–Cys605. Asn611 carries N-linked (GlcNAc...) asparagine glycosylation.

Belongs to the acid sphingomyelinase family. In terms of assembly, monomer. Interacts with SORT1; the interaction is required for SMPD1 targeting to lysosomes. Zn(2+) is required as a cofactor. Proteolytically processed. Mature lysosomal form arises from C-terminal proteolytic processing of pro-sphingomyelin phosphodiesterase. In terms of processing, both lysosomal and secreted forms are glycosylated but they show a differential pattern of glycosylation. Post-translationally, phosphorylated at Ser-506 by PRKCD upon stress stimuli. Phosphorylation is required for secretion. This form is generated following cleavage by CASP7 in the extracellular milieu. It shows increased activity.

The protein resides in the lysosome. The protein localises to the lipid droplet. It is found in the secreted. It localises to the extracellular space. The enzyme catalyses a sphingomyelin + H2O = phosphocholine + an N-acylsphing-4-enine + H(+). It catalyses the reaction N-(octadecanoyl)-sphing-4-enine-1-phosphocholine + H2O = N-octadecanoylsphing-4-enine + phosphocholine + H(+). It carries out the reaction a 1,2-diacyl-sn-glycero-3-phosphocholine + H2O = phosphocholine + a 1,2-diacyl-sn-glycerol + H(+). The catalysed reaction is 1,2-dihexadecanoyl-sn-glycero-3-phosphocholine + H2O = 1,2-dihexadecanoyl-sn-glycerol + phosphocholine + H(+). With respect to regulation, hydrolysis of liposomal sphingomyelin is stimulated by incorporation of diacylglycerol (DAG), ceramide and free fatty acids into the liposomal membranes. Phosphatidylcholine hydrolysis is inhibited by incorporation of cholesterol, ceramide, DAG, monoacylglycerol and fatty acids. Its function is as follows. Converts sphingomyelin to ceramide. Exists as two enzymatic forms that arise from alternative trafficking of a single protein precursor, one that is targeted to the endolysosomal compartment, whereas the other is released extracellularly. However, in response to various forms of stress, lysosomal exocytosis may represent a major source of the secretory form. In the lysosomes, converts sphingomyelin to ceramide. Plays an important role in the export of cholesterol from the intraendolysosomal membranes. Also has phospholipase C activities toward 1,2-diacylglycerolphosphocholine and 1,2-diacylglycerolphosphoglycerol. Modulates stress-induced apoptosis through the production of ceramide. Functionally, when secreted, modulates cell signaling with its ability to reorganize the plasma membrane by converting sphingomyelin to ceramide. Secreted form is increased in response to stress and inflammatory mediators such as IL1B, IFNG or TNF as well as upon infection with bacteria and viruses. Produces the release of ceramide in the outer leaflet of the plasma membrane playing a central role in host defense. Ceramide reorganizes these rafts into larger signaling platforms that are required to internalize P.aeruginosa, induce apoptosis and regulate the cytokine response in infected cells. In wounded cells, the lysosomal form is released extracellularly in the presence of Ca(2+) and promotes endocytosis and plasma membrane repair. In terms of biological role, this form is generated following cleavage by CASP7 in the extracellular milieu in response to bacterial infection. It shows increased ability to convert sphingomyelin to ceramide and promotes plasma membrane repair. Plasma membrane repair by ceramide counteracts the action of gasdermin-D (GSDMD) perforin (PRF1) pores that are formed in response to bacterial infection. Its function is as follows. (Microbial infection) Secretion is activated by bacteria such as P.aeruginosa, this activation results in the release of ceramide in the outer leaflet of the plasma membrane which facilitates the infection. This Mus musculus (Mouse) protein is Sphingomyelin phosphodiesterase.